The following is a 346-amino-acid chain: Holliday junction branch migration complex subunit RuvB (346 aa).

Positions 1-16 (MSDADRLITPEKRGED) are enriched in basic and acidic residues. The segment at 1–23 (MSDADRLITPEKRGEDIDTTLRP) is disordered. Residues 1-182 (MSDADRLITP…FGIPVRLAFY (182 aa)) are large ATPase domain (RuvB-L). ATP-binding positions include Leu21, Arg22, Gly63, Lys66, Thr67, Thr68, 129 to 131 (EDF), Arg172, Tyr182, and Arg219. Residue Thr67 participates in Mg(2+) binding. Positions 183–253 (TVDELELIVR…IADEALTRLL (71 aa)) are small ATPAse domain (RuvB-S). The interval 256–346 (NMGLDQLDMR…AQFRLTLEDD (91 aa)) is head domain (RuvB-H). 3 residues coordinate DNA: Arg292, Arg311, and Arg316.

It belongs to the RuvB family. In terms of assembly, homohexamer. Forms an RuvA(8)-RuvB(12)-Holliday junction (HJ) complex. HJ DNA is sandwiched between 2 RuvA tetramers; dsDNA enters through RuvA and exits via RuvB. An RuvB hexamer assembles on each DNA strand where it exits the tetramer. Each RuvB hexamer is contacted by two RuvA subunits (via domain III) on 2 adjacent RuvB subunits; this complex drives branch migration. In the full resolvosome a probable DNA-RuvA(4)-RuvB(12)-RuvC(2) complex forms which resolves the HJ.

It localises to the cytoplasm. It catalyses the reaction ATP + H2O = ADP + phosphate + H(+). The RuvA-RuvB-RuvC complex processes Holliday junction (HJ) DNA during genetic recombination and DNA repair, while the RuvA-RuvB complex plays an important role in the rescue of blocked DNA replication forks via replication fork reversal (RFR). RuvA specifically binds to HJ cruciform DNA, conferring on it an open structure. The RuvB hexamer acts as an ATP-dependent pump, pulling dsDNA into and through the RuvAB complex. RuvB forms 2 homohexamers on either side of HJ DNA bound by 1 or 2 RuvA tetramers; 4 subunits per hexamer contact DNA at a time. Coordinated motions by a converter formed by DNA-disengaged RuvB subunits stimulates ATP hydrolysis and nucleotide exchange. Immobilization of the converter enables RuvB to convert the ATP-contained energy into a lever motion, pulling 2 nucleotides of DNA out of the RuvA tetramer per ATP hydrolyzed, thus driving DNA branch migration. The RuvB motors rotate together with the DNA substrate, which together with the progressing nucleotide cycle form the mechanistic basis for DNA recombination by continuous HJ branch migration. Branch migration allows RuvC to scan DNA until it finds its consensus sequence, where it cleaves and resolves cruciform DNA. This chain is Holliday junction branch migration complex subunit RuvB, found in Agrobacterium fabrum (strain C58 / ATCC 33970) (Agrobacterium tumefaciens (strain C58)).